The sequence spans 295 residues: 2S seed storage protein (295 aa).

An N-terminal signal peptide occupies residues 1 to 20; the sequence is MAKQIVLALAFAALVAFATA. Residues 21 to 161 constitute a propeptide that is removed on maturation; sequence HTTIITTTIE…TITTTVTESN (141 aa). Over residues 195–208 the composition is skewed to polar residues; the sequence is EQQMQQSPRSTRPY. The tract at residues 195–215 is disordered; it reads EQQMQQSPRSTRPYQQRPGQQ.

It belongs to the 2S seed storage albumins family. Post-translationally, the 38 kDa precursor may be cleaved into two polypeptides of approximately the same size. The mature protein is composed of a single polypeptide containing one or more intra-molecular disulfide linkages.

In terms of biological role, this is a 2S seed storage protein. This chain is 2S seed storage protein (HAG5), found in Helianthus annuus (Common sunflower).